Reading from the N-terminus, the 690-residue chain is Translation initiation factor IF-2 (690 aa).

Residues proline 178–glutamate 346 form the tr-type G domain. A G1 region spans residues glycine 187–threonine 194. GTP is bound at residue glycine 187 to threonine 194. Positions glycine 212 to serine 216 are G2. The G3 stretch occupies residues aspartate 233–glycine 236. Residues aspartate 233 to histidine 237 and asparagine 287 to aspartate 290 each bind GTP. Residues asparagine 287–aspartate 290 form a G4 region. The segment at serine 324 to arginine 326 is G5.

Belongs to the TRAFAC class translation factor GTPase superfamily. Classic translation factor GTPase family. IF-2 subfamily.

The protein localises to the cytoplasm. Its function is as follows. One of the essential components for the initiation of protein synthesis. Protects formylmethionyl-tRNA from spontaneous hydrolysis and promotes its binding to the 30S ribosomal subunits. Also involved in the hydrolysis of GTP during the formation of the 70S ribosomal complex. The protein is Translation initiation factor IF-2 of Thermotoga sp. (strain RQ2).